The chain runs to 1250 residues: Protein suppressor of variegation 3-7 (1250 aa).

Disordered regions lie at residues 107–148 and 160–186; these read LNNP…HSYH and HDPG…GGMR. Positions 132-141 are enriched in polar residues; the sequence is STKTEPSSDA. Over residues 164–175 the composition is skewed to acidic residues; sequence DSQDDDDEDDES. 3 positions are modified to phosphoserine: Ser165, Ser175, and Ser176. 4 C2H2-type zinc fingers span residues 217 to 236, 319 to 343, 425 to 446, and 487 to 512; these read CLYC…IQQH, CRIC…TKGH, CTLC…TRAH, and CSVC…SEKH. A compositionally biased stretch (basic and acidic residues) spans 343–354; it reads HMEALRNLDSDK. Residues 343-398 are disordered; the sequence is HMEALRNLDSDKRSRKRKRSKSNSVTNSGGDEAEREKESEPEVGPEDAQDTPVVMM. The disordered stretch occupies residues 525–564; that stretch reads VGSADGRGGDNMDEEEAAASDQAQSSQTDDSEDNDDDNWS. A compositionally biased stretch (low complexity) spans 543–552; sequence ASDQAQSSQT. Acidic residues predominate over residues 553-563; sequence DDSEDNDDDNW. The C2H2-type 5 zinc-finger motif lies at 605 to 629; that stretch reads QICKFCRVRFHNEAAKARHELSARH. The segment at 642–684 is disordered; sequence KLHQGTNTQTKHNAQDDEESQEQDEEYGEEEEDAEEDSQSNFD. Acidic residues predominate over residues 657–679; the sequence is DDEESQEQDEEYGEEEEDAEEDS. 2 C2H2-type zinc fingers span residues 737-761 and 829-852; these read CKLC…TSRH and CRVC…SRKH. Positions 851–860 are enriched in basic and acidic residues; the sequence is KHVENKERQR. The tract at residues 851-915 is disordered; sequence KHVENKERQR…PLAKRSRRSM (65 aa). Ser871 and Ser873 each carry phosphoserine. A compositionally biased stretch (basic and acidic residues) spans 879–897; it reads DAERQESGMDKESENDMSV. At Ser975 the chain carries Phosphoserine. The BESS domain occupies 987–1026; it reads RHVMDLFFDSISPTMKSLPPDLAAEGKSKIMQLVCSLELR. Positions 1032-1055 are enriched in low complexity; that stretch reads ATTPTPATVSASSKWPSSTTVTPV. Disordered regions lie at residues 1032–1060, 1079–1116, 1154–1180, and 1205–1236; these read ATTP…TPPA, TTPH…NGSA, QSRT…ADLS, and NTPQ…NGCQ. 2 stretches are compositionally biased toward polar residues: residues 1079–1091 and 1104–1114; these read TTPH…QNNN and GASSAQVTING. Over residues 1206-1224 the composition is skewed to low complexity; that stretch reads TPQMQQPQQAQASITSSTP.

As to quaternary structure, interacts with Su(var)39 through the BESS domain.

Its subcellular location is the nucleus. Its function is as follows. Dose-limiting factor in position-effect variegation, the inactivation in some cells of a gene translocated next to heterochromatin. It could play a role in chromosome condensation. The polypeptide is Protein suppressor of variegation 3-7 (Su(var)3-7) (Drosophila melanogaster (Fruit fly)).